The chain runs to 432 residues: D-amino acid dehydrogenase 1 (432 aa).

3–17 (VLVLGSGVIGTASAY) is a binding site for FAD. The disordered stretch occupies residues 410-432 (GLDISRYSNSPENAKNAHPAPAH).

It belongs to the DadA oxidoreductase family. FAD serves as cofactor.

The catalysed reaction is a D-alpha-amino acid + A + H2O = a 2-oxocarboxylate + AH2 + NH4(+). The protein operates within amino-acid degradation; D-alanine degradation; NH(3) and pyruvate from D-alanine: step 1/1. In terms of biological role, catalyzes the oxidative deamination of D-amino acids. Has very broad substrate specificity; all the D-amino acids tested can be used as the substrate except D-Glu and D-Gln. Participates in the utilization of several D-amino acids as the sole source of nitrogen, i.e. D-alanine, D-histidine, D-phenylalanine, D-serine, D-threonine, and D-valine. This Pseudomonas aeruginosa (strain ATCC 15692 / DSM 22644 / CIP 104116 / JCM 14847 / LMG 12228 / 1C / PRS 101 / PAO1) protein is D-amino acid dehydrogenase 1 (dadA1).